Here is a 405-residue protein sequence, read N- to C-terminus: Aurora kinase A (405 aa).

Polar residues-rich tracts occupy residues 32–82 (VPSQ…QLQA) and 91–110 (RSLN…PGNN). The tract at residues 32–127 (VPSQNPLSAN…KQKNEESKKR (96 aa)) is disordered. Ser42 and Ser52 each carry phosphoserine. Basic and acidic residues predominate over residues 111-127 (SEKELATKQKNEESKKR). Positions 134 to 384 (FEIGRPLGKG…LKDVLEHPWI (251 aa)) constitute a Protein kinase domain. ATP contacts are provided by residues Lys144, Lys163, and 212-214 (EYA). Catalysis depends on Asp257, which acts as the Proton acceptor. Lys259 participates in a covalent cross-link: Glycyl lysine isopeptide (Lys-Gly) (interchain with G-Cter in SUMO2). ATP is bound by residues 261–262 (EN) and Asp275. Residues 281 to 294 (HAPSSRRTTLCGTL) are activation segment. A phosphothreonine mark is found at Thr288 and Thr289. Ser343 is modified (phosphoserine). Positions 385 to 405 (MANSSKPSSSQKSKDSTSKQS) are disordered. A compositionally biased stretch (basic and acidic residues) spans 396–405 (KSKDSTSKQS).

This sequence belongs to the protein kinase superfamily. Ser/Thr protein kinase family. Aurora subfamily. In terms of assembly, part of a complex composed of NEDD9, AURKA and CTTN; within the complex NEDD9 acts as a scaffold protein and is required for complex formation. Identified in a complex with AUNIP and NIN. Interacts with FBXL7. Interacts with CPEB1, JTB, TACC1, TPX2, PPP2CA, as well as with the protein phosphatase type 1 (PP1) isoforms PPP1CA, PPP1CB and PPP1CC. Also interacts with its substrates ARHGEF2, BORA, KIF2A, PARD3, and p53/TP53. Interaction with BORA promotes phosphorylation of PLK1. Interacts with CIMAP3. Interacts with GADD45A, competing with its oligomerization. Interacts (via C-terminus) with AUNIP (via C-terminus). Interacts with FRY; this interaction facilitates AURKA-mediated PLK1 phosphorylation. Interacts with SIRT2. Interacts with MYCN; interaction is phospho-independent and triggers AURKA activation; AURKA competes with FBXW7 for binding to unphosphorylated MYCN but not for binding to phosphorylated MYCN. Interacts with HNRNPU. Interacts with AAAS. Interacts with KLHL18 and CUL3. Interacts with FOXP1. Interacts with HDAC6; AURKA-mediated phosphorylation of HDAC6 promotes deacetylation of alpha-tubulin. Activated by phosphorylation at Thr-289; this brings about a change in the conformation of the activation segment. Phosphorylation at Thr-289 varies during the cell cycle and is highest during M phase. Autophosphorylated at Thr-289 upon TPX2 binding. Thr-289 can be phosphorylated by several kinases, including PAK and PKA. Protein phosphatase type 1 (PP1) binds AURKA and inhibits its activity by dephosphorylating Thr-289 during mitosis. Phosphorylation at Ser-343 decreases the kinase activity. PPP2CA controls degradation by dephosphorylating Ser-52 at the end of mitosis. Post-translationally, ubiquitinated by the E3 ubiquitin-protein ligase complex SCF(FBXL7) during mitosis, leading to its degradation by the proteasome. Ubiquitinated by CHFR, leading to its degradation by the proteasome. Ubiquitinated by the anaphase-promoting complex (APC), leading to its degradation by the proteasome. Ubiquitinated by the CUL3-KLHL18 ligase leading to its activation at the centrosome which is required for initiating mitotic entry. Ubiquitination mediated by CUL3-KLHL18 ligase does not lead to its degradation by the proteasome.

It localises to the cytoplasm. The protein localises to the cytoskeleton. It is found in the microtubule organizing center. Its subcellular location is the centrosome. The protein resides in the spindle pole. It localises to the centriole. The protein localises to the cell projection. It is found in the neuron projection. Its subcellular location is the cilium. The protein resides in the cilium basal body. It localises to the basolateral cell membrane. The catalysed reaction is L-seryl-[protein] + ATP = O-phospho-L-seryl-[protein] + ADP + H(+). It carries out the reaction L-threonyl-[protein] + ATP = O-phospho-L-threonyl-[protein] + ADP + H(+). With respect to regulation, activation of CDK1, appears to be an upstream event of AURKA activation. Phosphatase inhibitor-2 (PPP1R2) and TPX2 act also as activators. Inactivated by the G2 checkpoint. Inhibited by GADD45A and p53/TP53, and through dephosphorylation by protein phosphatase type 1 (PP1). MLN8054 is also a potent and selective inhibitor. Activated during the early phase of cilia disassembly in the presence of CIMAP3. Inhibited by the small molecule inhibitor VX-680. In terms of biological role, mitotic serine/threonine kinase that contributes to the regulation of cell cycle progression. Associates with the centrosome and the spindle microtubules during mitosis and plays a critical role in various mitotic events including the establishment of mitotic spindle, centrosome duplication, centrosome separation as well as maturation, chromosomal alignment, spindle assembly checkpoint, and cytokinesis. Required for normal spindle positioning during mitosis and for the localization of NUMA1 and DCTN1 to the cell cortex during metaphase. Required for initial activation of CDK1 at centrosomes. Phosphorylates numerous target proteins, including ARHGEF2, BORA, BRCA1, CDC25B, DLGP5, HDAC6, KIF2A, LATS2, NDEL1, PARD3, PPP1R2, PLK1, RASSF1, TACC3, p53/TP53 and TPX2. Phosphorylates MCRS1 which is required for MCRS1-mediated kinetochore fiber assembly and mitotic progression. Regulates KIF2A tubulin depolymerase activity. Important for microtubule formation and/or stabilization. Required for normal axon formation. Plays a role in microtubule remodeling during neurite extension. Also acts as a key regulatory component of the p53/TP53 pathway, and particularly the checkpoint-response pathways critical for oncogenic transformation of cells, by phosphorylating and destabilizing p53/TP53. Phosphorylates its own inhibitors, the protein phosphatase type 1 (PP1) isoforms, to inhibit their activity. Inhibits cilia outgrowth. Required for cilia disassembly via phosphorylation of HDAC6 and subsequent deacetylation of alpha-tubulin. Regulates protein levels of the anti-apoptosis protein BIRC5 by suppressing the expression of the SCF(FBXL7) E3 ubiquitin-protein ligase substrate adapter FBXL7 through the phosphorylation of the transcription factor FOXP1. This is Aurora kinase A from Canis lupus familiaris (Dog).